Here is a 129-residue protein sequence, read N- to C-terminus: N16.2 matrix protein (129 aa).

The N-terminal stretch at 1 to 23 (MKCTLRWTITALVLLGICHLARP) is a signal peptide. Tandem repeats lie at residues 91–92 (NG), 93–94 (NG), 95–96 (DG), 97–98 (NG), and 99–100 (NG). The 5 X 2 AA tandem repeats of N-G stretch occupies residues 91–100 (NGNGDGNGNG).

Belongs to the N16 matrix protein family. In terms of assembly, heterooligomer; disulfide-linked. Pif97, Pif80, N16 and other proteins form a complex. In terms of tissue distribution, component of conchiolin, the organic matrix of nacre. Expressed at extremely high levels in the dorsal region of the mantle, which region may be responsible for the nacreous layer formation, but only in trace amounts at the mantle edge, which region may be responsible for the prismatic layer formation.

The protein localises to the secreted. It is found in the extracellular space. Its subcellular location is the extracellular matrix. May be specifically involved in the formation of the nacreous layer. The polypeptide is N16.2 matrix protein (Pinctada fucata (Akoya pearl oyster)).